A 583-amino-acid polypeptide reads, in one-letter code: cAMP-dependent protein kinase catalytic subunit 3 (583 aa).

Disordered stretches follow at residues A51–K75 and S98–K264. Composition is skewed to polar residues over residues T52 to P69 and S98 to L107. Positions T108–S162 are enriched in low complexity. A compositionally biased stretch (acidic residues) spans D163–Q176. The span at P181–S200 shows a compositional bias: low complexity. A compositionally biased stretch (acidic residues) spans N205 to G219. Basic and acidic residues predominate over residues G221–S234. Acidic residues predominate over residues E235–E256. The region spanning Y274 to F528 is the Protein kinase domain. Residues V280–V288 and K303 contribute to the ATP site. D397 serves as the catalytic Proton acceptor. The 55-residue stretch at K529–F583 folds into the AGC-kinase C-terminal domain.

Belongs to the protein kinase superfamily. AGC Ser/Thr protein kinase family. cAMP subfamily. In terms of tissue distribution, expressed in embryonic mesoderm, and the optic lamina, wing disk and leg disks of third instar larvae. More abundant in adult head than adult body.

The enzyme catalyses L-seryl-[protein] + ATP = O-phospho-L-seryl-[protein] + ADP + H(+). It catalyses the reaction L-threonyl-[protein] + ATP = O-phospho-L-threonyl-[protein] + ADP + H(+). In terms of biological role, does not have an essential role in development. This chain is cAMP-dependent protein kinase catalytic subunit 3 (Pka-C3), found in Drosophila melanogaster (Fruit fly).